The following is a 422-amino-acid chain: Keratin, type I cytoskeletal 23 (422 aa).

The segment covering 1 to 13 (MNSGHSFSQTPSA) has biased composition (polar residues). The tract at residues 1–71 (MNSGHSFSQT…GRSSPLLGGN (71 aa)) is head. Residues 1-73 (MNSGHSFSQT…SSPLLGGNGK (73 aa)) form a disordered region. The coil 1A stretch occupies residues 72–107 (GKATMQNLNDRLASYLEKVRALEEANMKLESRILKW). The region spanning 72–382 (GKATMQNLND…RLLEGESEGT (311 aa)) is the IF rod domain. Positions 108 to 125 (HQQRDPGSKKDYSQYEEN) are linker 1. A coil 1B region spans residues 126–217 (ITHLQEQIVD…KHHEQEMEKH (92 aa)). The tract at residues 218 to 240 (HVPSDFNVNVKVDTGPREDLIKV) is linker 12. Residues 241 to 378 (LEDMRQEYEL…TTYRRLLEGE (138 aa)) form a coil 2 region. Residues 379–422 (SEGTREESKSSMKVSATPKIKAITQETINGRLVLCQVNEIQKHA) form a rod-like helical tail region.

The protein belongs to the intermediate filament family. Heterotetramer of two type I and two type II keratins.

In Homo sapiens (Human), this protein is Keratin, type I cytoskeletal 23 (KRT23).